The sequence spans 501 residues: ATP synthase subunit alpha (501 aa).

Residue 169–176 participates in ATP binding; sequence GDRQTGKT.

The protein belongs to the ATPase alpha/beta chains family. As to quaternary structure, F-type ATPases have 2 components, CF(1) - the catalytic core - and CF(0) - the membrane proton channel. CF(1) has five subunits: alpha(3), beta(3), gamma(1), delta(1), epsilon(1). CF(0) has three main subunits: a(1), b(2) and c(9-12). The alpha and beta chains form an alternating ring which encloses part of the gamma chain. CF(1) is attached to CF(0) by a central stalk formed by the gamma and epsilon chains, while a peripheral stalk is formed by the delta and b chains.

The protein resides in the cell membrane. It carries out the reaction ATP + H2O + 4 H(+)(in) = ADP + phosphate + 5 H(+)(out). In terms of biological role, produces ATP from ADP in the presence of a proton gradient across the membrane. The alpha chain is a regulatory subunit. This is ATP synthase subunit alpha from Streptococcus mutans serotype c (strain ATCC 700610 / UA159).